A 584-amino-acid chain; its full sequence is Major capsid protein (584 aa).

Belongs to the NCLDV major capsid protein family.

The protein localises to the virion. Its function is as follows. Major protein of the capsid. The chain is Major capsid protein (MCP) from Haptolina ericina (CeV01).